The following is a 353-amino-acid chain: G-protein complex alpha subunit gpaA (353 aa).

Residues 1 to 25 (MGCGMSTEDKEGKARNEEIENQLKR) are disordered. The segment covering 7–25 (TEDKEGKARNEEIENQLKR) has biased composition (basic and acidic residues). The region spanning 32-353 (NEIKMLLLGA…QENLRLCGLI (322 aa)) is the G-alpha domain. The interval 35 to 48 (KMLLLGAGESGKST) is G1 motif. Residues serine 47 and threonine 181 each contribute to the a divalent metal cation site. A G2 motif region spans residues 173–181 (DVLRSRVKT). Positions 196–205 (YRMFDVGGQR) are G3 motif. The tract at residues 265–272 (ILFLNKID) is G4 motif. The interval 323 to 328 (TCATDT) is G5 motif.

It belongs to the G-alpha family. G(q) subfamily. G proteins are composed of 3 units; alpha, beta and gamma. The alpha chain contains the guanine nucleotide binding site. Interacts with gprM.

Its function is as follows. G-protein complex alpha subunit that plays a role in conidiation and regulation of the biosynthesis of secondary metabolites such as dihydroxynaphthalene (DHN)-melanin, via interaction with the G protein-coupled receptor gprM. The sequence is that of G-protein complex alpha subunit gpaA from Aspergillus fumigatus (strain CBS 144.89 / FGSC A1163 / CEA10) (Neosartorya fumigata).